We begin with the raw amino-acid sequence, 241 residues long: Protein McbE (241 aa).

6 helical membrane-spanning segments follow: residues 17–35, 54–72, 105–123, 131–149, 163–181, and 212–230; these read TPFS…FFFL, ISWF…NYCL, LIMS…LTGF, IVMI…MVSL, STIY…IVSL, and LMTI…ISAL.

Its subcellular location is the cell membrane. Functionally, together with two further proteins McbF and McbG this protein causes immunity to the peptide antibiotic microcin B17 (MccB17), which inhibits DNA replication in enterobacteriaceae. Immunity is determined by two different mechanisms. McbE is involved in the production of extracellular MccB17 and, in a complex with McbF it also serves as 'pump' for the export of active MccB17 from the cytoplasm to the periplasmic space. The polypeptide is Protein McbE (mcbE) (Escherichia coli).